A 471-amino-acid chain; its full sequence is Anthocyanidin 3-O-glucosyltransferase (471 aa).

The active-site Proton acceptor is the His-24. An anthocyanidin is bound at residue His-24. Asp-130 acts as the Charge relay in catalysis. Thr-152 is a UDP-alpha-D-glucose binding site. Residue His-161 coordinates an anthocyanidin. Positions 352, 354, 369, 372, 374, and 377 each coordinate UDP-alpha-D-glucose. Residue Gly-392 participates in an anthocyanidin binding. UDP-alpha-D-glucose-binding residues include Asp-393 and Gln-394.

Belongs to the UDP-glycosyltransferase family.

The enzyme catalyses an anthocyanidin + UDP-alpha-D-glucose + H(+) = an anthocyanidin 3-O-beta-D-glucoside + UDP. Its pathway is pigment biosynthesis; anthocyanin biosynthesis. In terms of biological role, in the presence of other necessary color factors, this glycosylation reaction allows the accumulation of anthocyanin pigments. This chain is Anthocyanidin 3-O-glucosyltransferase (BZ1), found in Zea mays (Maize).